The sequence spans 37 residues: ACVGENQQCADWAGPHCCDGYYCTCRYFPKCICRNNN.

Cystine bridges form between Cys-2/Cys-18, Cys-9/Cys-23, Cys-17/Cys-33, and Cys-25/Cys-31. Asparagine amide is present on Asn-37.

The protein belongs to the neurotoxin 07 (Beta/delta-agtx) family. 03 (aga-4) subfamily. Aga sub-subfamily. As to expression, expressed by the venom gland.

It localises to the secreted. Insecticidal neurotoxin that induces an irreversible spastic paralysis when injected into insects. Modifies presynaptic voltage-gated sodium channels (Nav), causing them to open at the normal resting potential of the nerve. This leads to spontaneous release of neurotransmitter and repetitive action potentials in motor neurons. In Agelenopsis aperta (North American funnel-web spider), this protein is Mu-agatoxin-Aa1d.